The primary structure comprises 1110 residues: Nonribisomal peptide synthetase benY (1110 aa).

Residues Arg47–Arg443 form an adenylation region. The Carrier domain occupies Thr575–Pro651. Ser612 carries the post-translational modification O-(pantetheine 4'-phosphoryl)serine. Residues Tyr713 to Lys1025 form a condensation region.

This sequence belongs to the NRP synthetase family.

The protein operates within secondary metabolite biosynthesis. Functionally, nonribisomal peptide synthetase; part of the gene cluster that mediates the biosynthesis of benzomalvin A and D. The pathway begins with the loading of amino acid precursors onto the A domains of the non ribosomal peptide synthetases benY and benZ. BenY and the A1 domain of benZ are loaded with anthranilate (Anth), while the A2 domain of benZ is loaded with phenylalanine (Phe). N-methylation of Phe by the methyltransferase benX may happen before loading of Phe onto benZ, after loading of Phe, or after dipeptide formation. Condensation of Anth with the secondary amine of NmPhe or Phe is catalyzed by the C1 domain of benZ, forming a dipeptide intermediate. This is followed by in trans condensation of the Anth-NmPhe dipeptide with Anth bound to the T domain of benY by the C2 domain of benZ to form the linear tripeptide Anth-NmPhe-Anth. Cyclization and release of the tripeptide is then catalyzed by the C-terminal C domain of benY and the resulting 11-member macrocyclic intermediate is expected to spontaneously collapse to form the benzodiazepine core. Benzomalvin A is in conformational equilibrium with its atropisomer, benzomalvin D. The polypeptide is Nonribisomal peptide synthetase benY (Aspergillus terreus).